We begin with the raw amino-acid sequence, 194 residues long: Small ribosomal subunit protein uS4c (194 aa).

The region spanning 82–143 is the S4 RNA-binding domain; sequence MRLDNILFRL…KERSKVLIQN (62 aa).

It belongs to the universal ribosomal protein uS4 family. Part of the 30S ribosomal subunit. Contacts protein S5. The interaction surface between S4 and S5 is involved in control of translational fidelity.

Its subcellular location is the plastid. It is found in the chloroplast. Its function is as follows. One of the primary rRNA binding proteins, it binds directly to 16S rRNA where it nucleates assembly of the body of the 30S subunit. Functionally, with S5 and S12 plays an important role in translational accuracy. The chain is Small ribosomal subunit protein uS4c (rps4) from Cypella sp. (strain Porto Alegre 027).